The primary structure comprises 318 residues: UDP-N-acetylenolpyruvoylglucosamine reductase (318 aa).

One can recognise an FAD-binding PCMH-type domain in the interval 38–204 (IGGICPVVVE…LGIEILLKEG (167 aa)). Residue Arg-182 is part of the active site. The segment at 212-232 (SLKDKRDRRNSSQPENKKSAG) is disordered. A compositionally biased stretch (basic and acidic residues) spans 213-229 (LKDKRDRRNSSQPENKK). Ser-233 (proton donor) is an active-site residue. Glu-310 is a catalytic residue.

The protein belongs to the MurB family. FAD is required as a cofactor.

The protein localises to the cytoplasm. It carries out the reaction UDP-N-acetyl-alpha-D-muramate + NADP(+) = UDP-N-acetyl-3-O-(1-carboxyvinyl)-alpha-D-glucosamine + NADPH + H(+). The protein operates within cell wall biogenesis; peptidoglycan biosynthesis. In terms of biological role, cell wall formation. The chain is UDP-N-acetylenolpyruvoylglucosamine reductase from Leptospira borgpetersenii serovar Hardjo-bovis (strain JB197).